A 146-amino-acid chain; its full sequence is Large ribosomal subunit protein uL13 (146 aa).

It belongs to the universal ribosomal protein uL13 family. Part of the 50S ribosomal subunit.

Functionally, this protein is one of the early assembly proteins of the 50S ribosomal subunit, although it is not seen to bind rRNA by itself. It is important during the early stages of 50S assembly. The protein is Large ribosomal subunit protein uL13 of Sulfurisphaera tokodaii (strain DSM 16993 / JCM 10545 / NBRC 100140 / 7) (Sulfolobus tokodaii).